The primary structure comprises 194 residues: Segregation and condensation protein B (194 aa).

It belongs to the ScpB family. Homodimer. Homodimerization may be required to stabilize the binding of ScpA to the Smc head domains. Component of a cohesin-like complex composed of ScpA, ScpB and the Smc homodimer, in which ScpA and ScpB bind to the head domain of Smc. The presence of the three proteins is required for the association of the complex with DNA.

Its subcellular location is the cytoplasm. Participates in chromosomal partition during cell division. May act via the formation of a condensin-like complex containing Smc and ScpA that pull DNA away from mid-cell into both cell halves. This chain is Segregation and condensation protein B, found in Streptococcus agalactiae serotype Ia (strain ATCC 27591 / A909 / CDC SS700).